We begin with the raw amino-acid sequence, 262 residues long: uncharacterized protein (262 aa).

It belongs to the glycosyltransferase 2 family.

This is an uncharacterized protein from Mycobacterium tuberculosis (strain CDC 1551 / Oshkosh).